We begin with the raw amino-acid sequence, 122 residues long: Small ribosomal subunit protein bS6 (122 aa).

Belongs to the bacterial ribosomal protein bS6 family.

Binds together with bS18 to 16S ribosomal RNA. This Neisseria gonorrhoeae (strain ATCC 700825 / FA 1090) protein is Small ribosomal subunit protein bS6.